We begin with the raw amino-acid sequence, 70 residues long: Putative membrane protein insertion efficiency factor (70 aa).

Belongs to the UPF0161 family.

It is found in the cell membrane. Functionally, could be involved in insertion of integral membrane proteins into the membrane. The protein is Putative membrane protein insertion efficiency factor of Moorella thermoacetica (strain ATCC 39073 / JCM 9320).